Here is a 237-residue protein sequence, read N- to C-terminus: MLEEDMEVAIKMVVVGNGAVGKSSMIQRYCKGIFTKDYKKTIGVDFLERQIQVNDEDVRLMLWDTAGQEEFDAITKAYYRGAQACVLVFSTTDRESFEAISSWREKVVAEVGDIPTALVQNKIDLLDDSCIKNEEAEGLAKRLKLRFYRTSVKEDLNVSEVFKYLAEKHLQKLKQQITEDPEQTHSSSNKIGVFNASVGSHLGQNSSSLNGGDVINLRPNKQRTKRTRNPFSSCSVP.

GDP is bound at residue Ala19. Residues Val20, Gly21, Lys22, Ser23, and Ser24 each contribute to the GTP site. Residues Gly21, Lys22, Ser23, Ser24, and Asp37 each coordinate GDP. Ser23 contributes to the Mg(2+) binding site. The short motif at 28 to 46 is the Switch 1 element; that stretch reads RYCKGIFTKDYKKTIGVDF. Residue Tyr38 coordinates GTP. Residue Lys40 coordinates GDP. Thr41 contacts GTP. Mg(2+) is bound by residues Thr41 and Asp64. Positions 65–84 match the Switch 2 motif; that stretch reads TAGQEEFDAITKAYYRGAQA. GTP is bound by residues Gly67, Asn121, Lys122, Asp124, Ser151, Val152, and Lys153. GDP is bound by residues Asn121, Lys122, and Asp124. 2 residues coordinate GDP: Val152 and Lys153. Phosphoserine occurs at positions 186 and 187. Positions 204-237 are disordered; it reads QNSSSLNGGDVINLRPNKQRTKRTRNPFSSCSVP. At Cys234 the chain carries Cysteine methyl ester. A lipid anchor (S-geranylgeranyl cysteine) is attached at Cys234. Positions 235-237 are cleaved as a propeptide — removed in mature form; that stretch reads SVP.

Belongs to the small GTPase superfamily. Rab family. As to quaternary structure, interacts with SUFU. Mg(2+) serves as cofactor. In terms of tissue distribution, detected in brain neurons (at protein level). Forebrain and midbrain.

It localises to the cell membrane. The protein localises to the cytoplasm. The protein resides in the endosome membrane. Its subcellular location is the cytoplasmic vesicle. It is found in the autophagosome. It localises to the phagosome. The protein localises to the phagosome membrane. It catalyses the reaction GTP + H2O = GDP + phosphate + H(+). Its activity is regulated as follows. Regulated by guanine nucleotide exchange factors (GEFs) which promote the exchange of bound GDP for free GTP. Regulated by GTPase activating proteins (GAPs) which increase the GTP hydrolysis activity. Inhibited by GDP dissociation inhibitors (GDIs). Functionally, the small GTPases Rab are key regulators of intracellular membrane trafficking, from the formation of transport vesicles to their fusion with membranes. Rabs cycle between an inactive GDP-bound form and an active GTP-bound form that is able to recruit to membranes different set of downstream effectors directly responsible for vesicle formation, movement, tethering and fusion. Plays a role in autophagic vacuole assembly, and mediates defense against pathogens, such as S.aureus, by promoting their capture by autophagosomes that then merge with lysosomes. Together with SUFU, prevents nuclear import of GLI1, and thereby inhibits GLI1 transcription factor activity. Regulates GLI1 in differentiating chondrocytes. Likewise, regulates GLI3 proteolytic processing and modulates GLI2 and GLI3 transcription factor activity. In Mus musculus (Mouse), this protein is Ras-related protein Rab-23.